A 208-amino-acid chain; its full sequence is MDDVTKALNLVPMVVEQTSRGERAYDIYSRLLKERLIFLVGPIDDYMANLIVAQLLFLEAENPEKDINIYINSPGGVVTAGMAIYDTMQYIKPAVSTICVGQAASMGALLLASGASGKRYALPNSRVMIHQPLGGFQGQATDIDIHAREILALRARLNEILAKHTGQSLETIAHDTERDNFKSAVDAQAYGLVDQVLGQRPEELIQSS.

Catalysis depends on serine 105, which acts as the Nucleophile. The active site involves histidine 130.

Belongs to the peptidase S14 family. In terms of assembly, fourteen ClpP subunits assemble into 2 heptameric rings which stack back to back to give a disk-like structure with a central cavity, resembling the structure of eukaryotic proteasomes.

The protein localises to the cytoplasm. The enzyme catalyses Hydrolysis of proteins to small peptides in the presence of ATP and magnesium. alpha-casein is the usual test substrate. In the absence of ATP, only oligopeptides shorter than five residues are hydrolyzed (such as succinyl-Leu-Tyr-|-NHMec, and Leu-Tyr-Leu-|-Tyr-Trp, in which cleavage of the -Tyr-|-Leu- and -Tyr-|-Trp bonds also occurs).. Cleaves peptides in various proteins in a process that requires ATP hydrolysis. Has a chymotrypsin-like activity. Plays a major role in the degradation of misfolded proteins. The chain is ATP-dependent Clp protease proteolytic subunit from Xylella fastidiosa (strain 9a5c).